The sequence spans 79 residues: MKKLFAEFFGTYWLVFGGCGSAVFAAGYPTLGIGFAGVALAFGLTVLTMAYAVGHISGGHFNPAVSFGLWAGGRFSAKD.

A run of 2 helical transmembrane segments spans residues 4–24 (LFAE…SAVF) and 33–53 (IGFA…AYAV). Positions 62–64 (NPA) match the NPA 1 motif.

It belongs to the MIP/aquaporin (TC 1.A.8) family. Homotetramer.

It is found in the cell membrane. It carries out the reaction H2O(in) = H2O(out). Functionally, channel that permits osmotically driven movement of water in both directions. It is involved in the osmoregulation and in the maintenance of cell turgor during volume expansion in rapidly growing cells. It mediates rapid entry or exit of water in response to abrupt changes in osmolarity. This Flavobacterium johnsoniae (Cytophaga johnsonae) protein is Aquaporin Z.